Reading from the N-terminus, the 66-residue chain is Large ribosomal subunit protein uL29 (66 aa).

It belongs to the universal ribosomal protein uL29 family.

The protein is Large ribosomal subunit protein uL29 of Geobacillus kaustophilus (strain HTA426).